A 155-amino-acid chain; its full sequence is Ribosomal RNA large subunit methyltransferase H (155 aa).

Residues Leu-73, Gly-104, and 123-128 (LSPLTL) each bind S-adenosyl-L-methionine.

This sequence belongs to the RNA methyltransferase RlmH family. In terms of assembly, homodimer.

The protein localises to the cytoplasm. The catalysed reaction is pseudouridine(1915) in 23S rRNA + S-adenosyl-L-methionine = N(3)-methylpseudouridine(1915) in 23S rRNA + S-adenosyl-L-homocysteine + H(+). Specifically methylates the pseudouridine at position 1915 (m3Psi1915) in 23S rRNA. The chain is Ribosomal RNA large subunit methyltransferase H from Pseudomonas syringae pv. tomato (strain ATCC BAA-871 / DC3000).